Consider the following 149-residue polypeptide: General odorant-binding protein 99b (149 aa).

Residues Met1–Ala16 form the signal peptide. Disulfide bonds link Cys40-Cys71, Cys67-Cys125, and Cys114-Cys134.

It belongs to the PBP/GOBP family. As to expression, expressed in adult olfactory system. Expressed in subsets of sensilla in both olfactory organs, the maxillary palps, and third antennal segments.

Its subcellular location is the secreted. Its function is as follows. Present in the aqueous fluid surrounding olfactory sensory dendrites and are thought to aid in the capture and transport of hydrophobic odorants into and through this fluid. In Drosophila melanogaster (Fruit fly), this protein is General odorant-binding protein 99b (Obp99b).